The sequence spans 253 residues: FGFR1 oncogene partner 2 homolog (253 aa).

Positions 5-104 (IEKALADAKA…SALELIMSKY (100 aa)) form a coiled coil. S140 carries the phosphoserine modification. The stretch at 160 to 223 (LERRHLEANQ…LREILQITRE (64 aa)) forms a coiled coil. A disordered region spans residues 231–253 (DDASESTSLSALVTNSDLSLRKS). Over residues 235-253 (ESTSLSALVTNSDLSLRKS) the composition is skewed to polar residues.

This sequence belongs to the SIKE family.

Its subcellular location is the cytoplasm. Functionally, may be involved in wound healing pathway. This chain is FGFR1 oncogene partner 2 homolog (Fgfr1op2), found in Mus musculus (Mouse).